A 51-amino-acid polypeptide reads, in one-letter code: Mating pheromone Er-23 (51 aa).

Intrachain disulfides connect cysteine 3/cysteine 24, cysteine 6/cysteine 16, cysteine 13/cysteine 47, cysteine 27/cysteine 40, and cysteine 35/cysteine 51.

It localises to the secreted. Mating ciliate pheromones (or gamones) are diffusible extracellular communication signals that distinguish different intraspecific classes of cells commonly referred to as 'mating types'. They prepare the latter for conjugation by changing their cell surface properties. This Euplotes raikovi protein is Mating pheromone Er-23 (MAT23).